The primary structure comprises 220 residues: UPF0758 protein Asuc_0013 (220 aa).

Residues 98-220 (EFTNPLTVRL…YFSFAEQDWL (123 aa)) enclose the MPN domain. Zn(2+)-binding residues include His169, His171, and Asp182. The JAMM motif motif lies at 169-182 (HNHPSGSAEPSASD).

This sequence belongs to the UPF0758 family.

The protein is UPF0758 protein Asuc_0013 of Actinobacillus succinogenes (strain ATCC 55618 / DSM 22257 / CCUG 43843 / 130Z).